A 363-amino-acid polypeptide reads, in one-letter code: Apelin receptor B (363 aa).

The Extracellular segment spans residues 1-38 (MESEGFSATTEQYEYYDYANETGLQPCDETDWDFSYSL). N20 carries N-linked (GlcNAc...) asparagine glycosylation. 2 disulfide bridges follow: C27–C287 and C109–C186. The helical transmembrane segment at 39-59 (LPVFYMIVFVLGLSGNGVVIF) threads the bilayer. The Cytoplasmic portion of the chain corresponds to 60 to 77 (TVWKAKPKRRSADTYIGN). The chain crosses the membrane as a helical span at residues 78–98 (LALADLAFVVTLPLWATYTAL). At 99–111 (GFHWPFGSALCKL) the chain is on the extracellular side. The helical transmembrane segment at 112 to 132 (SSYLVLLNMFASVFCLTCLSF) threads the bilayer. Residues 133–152 (DRYLAIVHSLSSAKLRSRSS) are Cytoplasmic-facing. Residues 153–173 (ILVSLAVIWLFSGLLALPSLI) traverse the membrane as a helical segment. Topologically, residues 174–200 (LRDTRVEGNNTICDLDFSGVSSKENEN) are extracellular. An N-linked (GlcNAc...) asparagine glycan is attached at N182. The chain crosses the membrane as a helical span at residues 201 to 221 (FWIGGLSILTTVPGFLLPLLL). The Cytoplasmic segment spans residues 222-249 (MTIFYCFIGGKVTMHFQNLKKEEQKKKR). A helical transmembrane segment spans residues 250–270 (LLKIIITLVVVFAICWLPFHI). Over 271–297 (LKTIHFLDLMGFLELSCSAQNIIVSLH) the chain is Extracellular. The chain crosses the membrane as a helical span at residues 298 to 318 (PYATCLAYVNSCLNPFLYAFF). The Cytoplasmic portion of the chain corresponds to 319-363 (DLRFRSQCFFFFGFKKVLQGHLSNTSSSLSAQTQKSEIHSLATKV).

It belongs to the G-protein coupled receptor 1 family. As to expression, expressed in all blood vessels including the posterior cardinal vein, intersomitic veins and the vitelline vein network.

The protein localises to the cell membrane. G protein-coupled receptor for peptide hormones apelin (apln) and apelin receptor early endogenous ligand (apela), that plays a role in the regulation of normal cardiovascular function and fluid homeostasis. When acting as apelin receptor, activates both G(i) protein pathway that inhibits adenylate cyclase activity, and the beta-arrestin pathway that promotes internalization of the receptor. Also functions as mechanoreceptor that is activated by pathological stimuli in a G-protein-independent fashion to induce beta-arrestin signaling, hence eliciting cardiac hypertrophy. However, the presence of apelin ligand blunts cardiac hypertrophic induction from APLNR/APJ on response to pathological stimuli. Plays a key role in early development such as gastrulation, blood vessels formation and heart morphogenesis by acting as a receptor for apela hormone, promoting endoderm and mesendoderm cell migration and regulating the migration of cells fated to become myocardial progenitors, respectively. Promotes angioblast migration toward the embryonic midline, i.e. the position of the future vessel formation, during vasculogenesis. May promote sinus venosus (SV)-derived endothelial cells migration into the developing heart to promote coronary blood vessel development. Required for cardiovascular development, particularly for intersomitic vein angiogenesis by acting as a receptor for apln hormone. Also plays a role in various processes in adults such as regulation of blood vessel formation, blood pressure, heart contractility, and heart failure. Acts upstream of the i/o type of G-alpha proteins in the differentiation of endothelium, erythroid cells, myeloid cells and cardiomyocytes. This is Apelin receptor B (aplnr-b) from Xenopus laevis (African clawed frog).